A 117-amino-acid chain; its full sequence is MIEYLAVLIYFLFSLALASLIIFLSFIFAPQKPDPEKISAYECGFDPFDDARGKFDIRFYLVAILFIIFDLEVTFLFPWAVTLGKIGFFGFWTMMAFLIILTIGFIYEWKKGALEWE.

Transmembrane regions (helical) follow at residues 8-28 (LIYFLFSLALASLIIFLSFIF), 61-81 (LVAILFIIFDLEVTFLFPWAV), and 86-106 (IGFFGFWTMMAFLIILTIGFI).

The protein belongs to the complex I subunit 3 family.

It localises to the mitochondrion membrane. It carries out the reaction a ubiquinone + NADH + 5 H(+)(in) = a ubiquinol + NAD(+) + 4 H(+)(out). In terms of biological role, core subunit of the mitochondrial membrane respiratory chain NADH dehydrogenase (Complex I) that is believed to belong to the minimal assembly required for catalysis. Complex I functions in the transfer of electrons from NADH to the respiratory chain. The immediate electron acceptor for the enzyme is believed to be ubiquinone. This is NADH-ubiquinone oxidoreductase chain 3 (ND3) from Tetraselmis subcordiformis (Marine green alga).